We begin with the raw amino-acid sequence, 332 residues long: Spherulin-4 (332 aa).

An N-terminal signal peptide occupies residues 1-22; that stretch reads MNIKIVVLVIFAILLGSALAWH. The segment at 26 to 60 is disordered; it reads HHNPTKAPTEAPHRGGGGGGGHNTPAPTQPPRQNT.

In Physarum polycephalum (Slime mold), this protein is Spherulin-4.